The primary structure comprises 311 residues: MVSTATQIGHFSFDNCLMNAAGVYCMTKEELMEVEKSQAASFVTKTGTLEVRPGNPEPRYADTRLGSINSMGLPNNGFRYYLDFVSDLAKTGQHKPHFLSVVGLSPTETETILKAIMASDYEGLVELNLSCPNVPGKPQIAYDFETTDQLLENIFTYYTKPLGIKLPPYFDIVHFDQAAAIFNKYPLSFVNCVNSIGNGLVIEDEQVLIKPKNGFGGIGGDYIKPTALANVHAFYKRLKPSIHIIGTGGVKTGRDAFEHILCGASMVQIGTVLHQEGPAIFERVTKELKTIMVEKGYQRLADFRGNLRYKD.

Substrate contacts are provided by residues lysine 45, 69–73 (NSMGL), and asparagine 128. 45–46 (KT) contributes to the FMN binding site. Asparagine 128 lines the FMN pocket. The active-site Nucleophile is the cysteine 131. FMN is bound by residues lysine 165 and valine 193. 194-195 (NS) is a binding site for substrate. FMN is bound by residues glycine 220, 248–249 (GG), and 270–271 (GT).

Belongs to the dihydroorotate dehydrogenase family. Type 1 subfamily. In terms of assembly, homodimer. FMN serves as cofactor.

It is found in the cytoplasm. The catalysed reaction is (S)-dihydroorotate + fumarate = orotate + succinate. It participates in pyrimidine metabolism; UMP biosynthesis via de novo pathway. Its function is as follows. Catalyzes the conversion of dihydroorotate to orotate with fumarate as the electron acceptor. In Streptococcus pyogenes serotype M18 (strain MGAS8232), this protein is Putative dihydroorotate dehydrogenase A (fumarate) (pyrD).